Here is a 238-residue protein sequence, read N- to C-terminus: Survival of motor neuron-related-splicing factor 30 (238 aa).

The Tudor domain occupies 72 to 132 (SWKVGDKCMA…KPVEEGRKAK (61 aa)). Residues 142–160 (KKEMIAQQREYKKKKALKK) carry the Nuclear localization signal motif. Ser-201 bears the Phosphoserine mark. Lys-219 bears the N6-acetyllysine mark.

It belongs to the SMN family. In terms of assembly, associates with spliceosomes. Associates with U4/U5/U6 tri-snRNP and with U2 snRNP. Interacts (via Tudor domain) with SNRPD3 (via C-terminus); the interaction is direct. Detected at intermediate levels in skeletal muscle, and at low levels in heart and pancreas.

Its subcellular location is the nucleus speckle. It localises to the nucleus. The protein resides in the cajal body. Involved in spliceosome assembly. This is Survival of motor neuron-related-splicing factor 30 (SMNDC1) from Homo sapiens (Human).